Consider the following 1131-residue polypeptide: cGMP-specific 3',5'-cyclic phosphodiesterase (1131 aa).

Disordered stretches follow at residues 1–26 (MTDV…SAAT) and 42–150 (GVAP…SQQD). Over residues 42–63 (GVAPGAVPGPGSAAIPASSSSG) the composition is skewed to low complexity. A compositionally biased stretch (polar residues) spans 75–86 (SNNNRPAATNRS). The segment covering 110 to 136 (SSSTPSQSPSPSQSPSQASIQTQTSQQ) has biased composition (low complexity). GAF domains follow at residues 255–412 (DIDV…GIGI) and 444–625 (NLEC…GLGI). A PDEase domain is found at 655–978 (SQDQTEKLTQ…RNWQDLAEKV (324 aa)). Residue H731 is the Proton donor of the active site. Residues H735, H771, D772, and D882 each coordinate a divalent metal cation. 2 disordered regions span residues 1019-1048 (QQSQ…TGAL) and 1078-1131 (SHVS…CALL). Composition is skewed to basic and acidic residues over residues 1024 to 1035 (GSEDSHTPEHQR) and 1078 to 1088 (SHVSEDMDDKS). Residues 1097–1117 (ASGSMGRMSASSSTSSAGGQM) show a composition bias toward low complexity. Residues 1121–1131 (SKKRSKLCALL) show a composition bias toward basic residues. C1128 bears the Cysteine methyl ester mark. Residue C1128 is the site of S-farnesyl cysteine attachment. The propeptide at 1129–1131 (ALL) is removed in mature form.

Belongs to the cyclic nucleotide phosphodiesterase family. In terms of assembly, interacts with PrBP. A divalent metal cation serves as cofactor.

Its subcellular location is the cell membrane. The catalysed reaction is 3',5'-cyclic GMP + H2O = GMP + H(+). Has a role regulating cGMP transport in Malpighian tubule principal cells. The sequence is that of cGMP-specific 3',5'-cyclic phosphodiesterase from Drosophila erecta (Fruit fly).